Here is a 305-residue protein sequence, read N- to C-terminus: uncharacterized protein (305 aa).

A disordered region spans residues 208-236 (SYAQSPAVKKKKWRHSGGKKNNPRENHID). Positions 215-225 (VKKKKWRHSGG) are enriched in basic residues.

This is an uncharacterized protein from Bacillus subtilis (strain 168).